Consider the following 279-residue polypeptide: Thioredoxin-like 1-2, chloroplastic (279 aa).

The N-terminal 34 residues, 1-34 (MAATAAQAVAVKGSVAVPPCGSRGRRRGAVASVR), are a transit peptide targeting the chloroplast. The Thioredoxin domain occupies 61–203 (PRRSRPVPRN…FRDALAKHKP (143 aa)). Catalysis depends on nucleophile residues Cys126 and Cys129. Cys126 and Cys129 are disulfide-bonded. Residues 242 to 279 (GDAAAAQELDRGSTKLSPPAKPLVKQGSEERSLVSSGR) are disordered.

Belongs to the thioredoxin family.

The protein resides in the plastid. Its subcellular location is the chloroplast. Probable thiol-disulfide oxidoreductase that may participate in various redox reactions. The sequence is that of Thioredoxin-like 1-2, chloroplastic from Oryza sativa subsp. japonica (Rice).